Reading from the N-terminus, the 383-residue chain is 8-amino-7-oxononanoate synthase (383 aa).

Residue Arg-20 coordinates substrate. Position 107 to 108 (107 to 108) interacts with pyridoxal 5'-phosphate; sequence GY. Residue His-132 participates in substrate binding. Pyridoxal 5'-phosphate is bound by residues Ser-178, His-206, and Thr-233. Lys-236 is subject to N6-(pyridoxal phosphate)lysine. Thr-349 contacts substrate.

It belongs to the class-II pyridoxal-phosphate-dependent aminotransferase family. BioF subfamily. Homodimer. Pyridoxal 5'-phosphate is required as a cofactor.

The enzyme catalyses 6-carboxyhexanoyl-[ACP] + L-alanine + H(+) = (8S)-8-amino-7-oxononanoate + holo-[ACP] + CO2. It functions in the pathway cofactor biosynthesis; biotin biosynthesis. Functionally, catalyzes the decarboxylative condensation of pimeloyl-[acyl-carrier protein] and L-alanine to produce 8-amino-7-oxononanoate (AON), [acyl-carrier protein], and carbon dioxide. The chain is 8-amino-7-oxononanoate synthase from Chromobacterium violaceum (strain ATCC 12472 / DSM 30191 / JCM 1249 / CCUG 213 / NBRC 12614 / NCIMB 9131 / NCTC 9757 / MK).